A 348-amino-acid chain; its full sequence is 2-heptyl-4(1H)-quinolone synthase subunit PqsC (348 aa).

The active-site Acyl-thioester intermediate is the cysteine 129. Histidine 269 is an active-site residue.

Belongs to the thiolase-like superfamily. FabH family. Forms a tight complex with PqsB.

It localises to the cytoplasm. It catalyses the reaction (2-aminobenzoyl)acetate + octanoyl-CoA + H(+) = 2-heptyl-4(1H)-quinolone + CO2 + CoA + H2O. Folding of PqsC and binding of octanoate are promoted by PqsB. Binding of the octanoyl group probably increases the binding affinity of the complex for 2-ABA. Activity of the complex is inhibited by 2-aminoacetophenone (2-AA). In terms of biological role, required for the biosynthesis of the quorum-sensing signaling molecules 2-heptyl-4(1H)-quinolone (HHQ) and 2-heptyl-3-hydroxy-4(1H)-quinolone (Pseudomonas quinolone signal or PQS), which are important for biofilm formation and virulence. The PqsC/PqsB complex catalyzes the condensation of 2-aminobenzoylacetate (2-ABA) and octanoyl-CoA to form HHQ. First, PqsC acquires an octanoyl group from octanoyl-CoA and forms an octanoyl-PqsC intermediate. Then, together with PqsB, it catalyzes the coupling of 2-ABA with the octanoate group, leading to decarboxylation and dehydration, and resulting in closure of the quinoline ring. This chain is 2-heptyl-4(1H)-quinolone synthase subunit PqsC, found in Pseudomonas aeruginosa (strain ATCC 15692 / DSM 22644 / CIP 104116 / JCM 14847 / LMG 12228 / 1C / PRS 101 / PAO1).